The following is a 413-amino-acid chain: uncharacterized protein (413 aa).

An N-acetyltransferase domain is found at 3–155; sequence MEPRVLRREE…SRVRLSVPAG (153 aa). Residues 86 to 88, 94 to 99, and 122 to 123 each bind acetyl-CoA; these read VSV, RRGVLT, and SE. Tyr127 acts as the Proton donor in catalysis. Phe413 (proton acceptor; via carboxylate) is an active-site residue.

This sequence belongs to the acetyltransferase Eis family. As to quaternary structure, homohexamer; trimer of dimers.

This is an uncharacterized protein from Streptomyces coelicolor (strain ATCC BAA-471 / A3(2) / M145).